A 602-amino-acid polypeptide reads, in one-letter code: Elongation factor 4 (602 aa).

Residues 7 to 189 (SKIRNFCIIA…AIVRRVPPPQ (183 aa)) enclose the tr-type G domain. Residues 19–24 (DHGKST) and 136–139 (NKVD) each bind GTP.

It belongs to the TRAFAC class translation factor GTPase superfamily. Classic translation factor GTPase family. LepA subfamily.

The protein localises to the cell inner membrane. The enzyme catalyses GTP + H2O = GDP + phosphate + H(+). Functionally, required for accurate and efficient protein synthesis under certain stress conditions. May act as a fidelity factor of the translation reaction, by catalyzing a one-codon backward translocation of tRNAs on improperly translocated ribosomes. Back-translocation proceeds from a post-translocation (POST) complex to a pre-translocation (PRE) complex, thus giving elongation factor G a second chance to translocate the tRNAs correctly. Binds to ribosomes in a GTP-dependent manner. The protein is Elongation factor 4 of Prochlorococcus marinus (strain MIT 9215).